Reading from the N-terminus, the 688-residue chain is MIDRYKHQQLRIGSVSPQQITAWANKILPNGEIVGEVTKPYTFHYKTNKPEKDGLFCERIFGPIKSGICACGNYRVIGDEKEDPKFCEQCGVEFVDSRIRRYQMGYIKLACPVTHVWYLKRLPSYIANLLDKPLKELEGLVYCDVYPNFSFARPIAKKPTFLRLRGSFEYEIQSWKYSIPLFFTTQGFDTFRNREISTGAGAIREQLADPDLRTITDHSLVEWKELGEKGSTGNEWEDRKIGRRKDFLVRRLELAKNLIRTNVEPEWMVLRLLPVLPPELRPIIQIDGGKPMSSDINELYRRVIYRNNTLTDPLTTSRSTPGESVMCQEKLVQEAVDTLLDNGIRGQPMKDGHNKVYKSFSDVIEGKEGRFRETLLGKRVDYSGRSVIVVGPSLSLHRCGLPREIAIELFQTFVIRGLIRQHVASNIGIAKSKIREKEPIVWEILQEVMQGHPVLLNRAPTLHRLGIQAFQPILVEGRAICLHPLVRKGFNADFDGDQMAVHVPLSLEAQAEACLLMFSHMNLLSPTIGDPISVPTQDMLIGLYVLTIGNRRGICANRYNPCNCRNDNDQNETVDDNNYKYTKEKEPYFCSSYDALGAYRQKRIHLDSPLWLRWRLDQRVIASREVPIEVQYESSGTHHEIYGHYLIVRSVKKEILCIYIRTTVGHISFYREIEEAIQGFCRAYSYGT.

Zn(2+) contacts are provided by C69, C71, C87, and C90. 3 residues coordinate Mg(2+): D493, D495, and D497.

The protein belongs to the RNA polymerase beta' chain family. RpoC1 subfamily. In plastids the minimal PEP RNA polymerase catalytic core is composed of four subunits: alpha, beta, beta', and beta''. When a (nuclear-encoded) sigma factor is associated with the core the holoenzyme is formed, which can initiate transcription. It depends on Mg(2+) as a cofactor. The cofactor is Zn(2+).

It localises to the plastid. Its subcellular location is the chloroplast. It catalyses the reaction RNA(n) + a ribonucleoside 5'-triphosphate = RNA(n+1) + diphosphate. Functionally, DNA-dependent RNA polymerase catalyzes the transcription of DNA into RNA using the four ribonucleoside triphosphates as substrates. The sequence is that of DNA-directed RNA polymerase subunit beta' from Chloranthus spicatus (Chulantree).